The chain runs to 227 residues: Charged multivesicular body protein 4b (227 aa).

2 disordered regions span residues 1–26 and 186–227; these read MSGILGKLFGAGAGGKGAGKGPSPQE and SGPE…AGNM. The span at 9-20 shows a compositional bias: gly residues; it reads FGAGAGGKGAGK. The stretch at 25-185 forms a coiled coil; it reads QEAIQRLRDT…EELDKNLLEI (161 aa).

The protein belongs to the SNF7 family. As to quaternary structure, probable core component of the endosomal sorting required for transport complex III (ESCRT-III). ESCRT-III components are thought to multimerize to form a flat lattice on the perimeter membrane of the endosome.

The protein localises to the cytoplasm. The protein resides in the cytosol. It localises to the late endosome membrane. It is found in the midbody. In terms of biological role, probable core component of the endosomal sorting required for transport complex III (ESCRT-III) which is involved in multivesicular bodies (MVBs) formation and sorting of endosomal cargo proteins into MVBs. MVBs contain intraluminal vesicles (ILVs) that are generated by invagination and scission from the limiting membrane of the endosome and mostly are delivered to lysosomes enabling degradation of membrane proteins, such as stimulated growth factor receptors, lysosomal enzymes and lipids. This chain is Charged multivesicular body protein 4b (CHMP4B), found in Gallus gallus (Chicken).